The sequence spans 78 residues: Small ribosomal subunit protein bS20 (78 aa).

A disordered region spans residues 1-34 (MANIKSNLKRNKQNRARHTVVHSQTSAVKTQIKK). Basic residues predominate over residues 7 to 20 (NLKRNKQNRARHTV). Residues 21–34 (VHSQTSAVKTQIKK) show a composition bias toward polar residues.

This sequence belongs to the bacterial ribosomal protein bS20 family.

Its function is as follows. Binds directly to 16S ribosomal RNA. The sequence is that of Small ribosomal subunit protein bS20 from Malacoplasma penetrans (strain HF-2) (Mycoplasma penetrans).